Here is a 516-residue protein sequence, read N- to C-terminus: MPSSTSPDQGDDLETCILRFSDLDLKDMSLINPSSSLKAELDGSTKKKYSFAKKKAFALFVKTKEVPTKRSFECKEKLWKCCQQLFTDQTSIHRHVATQHADEIYHQTASILKQLAVTLSTSKSLSSADEKNPLKECLPHSHDVSAWLPDISCFNPDELISGQGSEEGEVLLYYCYRDLEDPQWICAWQTALCQQLHLTGKIRIAAEGINGTVGGSKLATRLYVEVMLSFPLFKDDLCKDDFKTSKGGAHCFPELRVGVFEEIVPMGISPKKISYKKPGIHLSPGEFHKEVEKFLSQANQEQSDTILLDCRNFYESKIGRFQGCLAPDIRKFSYFPSYVDKNLELFREKRVLMYCTGGIRCERGSAYLKAKGVCKEVFQLKGGIHKYLEEFPDGFYKGKLFVFDERYALSYNSDVVSECSYCGARWDQYKLCSTPQCHQLVLTCPACQGQGFTACCVTCQDKGSRKVSGPMQDSFKEECECTARRPRIPRELLQHVRQPVSPEPGPDAEEDGPVLV.

The residue at position 269 (serine 269) is a Phosphoserine. Positions 301–396 (EQSDTILLDC…YLEEFPDGFY (96 aa)) constitute a Rhodanese domain. Cysteine 355 (cysteine persulfide intermediate) is an active-site residue. A disordered region spans residues 490–516 (RELLQHVRQPVSPEPGPDAEEDGPVLV). The span at 506-516 (PDAEEDGPVLV) shows a compositional bias: acidic residues.

The sequence is that of Thiosulfate sulfurtransferase/rhodanese-like domain-containing protein 2 (TSTD2) from Pongo abelii (Sumatran orangutan).